A 233-amino-acid polypeptide reads, in one-letter code: Octanoyltransferase (233 aa).

The BPL/LPL catalytic domain occupies 34-212 (PDRPDVLLLL…AFAQTFELDL (179 aa)). Substrate contacts are provided by residues 76 to 83 (RGGEVTHH), 143 to 145 (AIG), and 156 to 158 (GFA). The active-site Acyl-thioester intermediate is Cys-174.

It belongs to the LipB family.

The protein resides in the cytoplasm. It carries out the reaction octanoyl-[ACP] + L-lysyl-[protein] = N(6)-octanoyl-L-lysyl-[protein] + holo-[ACP] + H(+). It participates in protein modification; protein lipoylation via endogenous pathway; protein N(6)-(lipoyl)lysine from octanoyl-[acyl-carrier-protein]: step 1/2. Catalyzes the transfer of endogenously produced octanoic acid from octanoyl-acyl-carrier-protein onto the lipoyl domains of lipoate-dependent enzymes. Lipoyl-ACP can also act as a substrate although octanoyl-ACP is likely to be the physiological substrate. In Synechococcus elongatus (strain ATCC 33912 / PCC 7942 / FACHB-805) (Anacystis nidulans R2), this protein is Octanoyltransferase.